The following is an 839-amino-acid chain: DNA-directed RNA polymerase YonO (839 aa).

Residues Asp-535, Asp-537, and Asp-539 each coordinate Mg(2+).

The protein belongs to the YRH RNA polymerase family. A divalent metal cation serves as cofactor.

The enzyme catalyses RNA(n) + a ribonucleoside 5'-triphosphate = RNA(n+1) + diphosphate. Functionally, a single subunit DNA-dependent RNA polymerase (RNAP) that catalyzes the transcription of DNA into RNA using the four ribonucleoside triphosphates (rNTPs) as substrates. The enzyme is more highly processive than the multisubunit RNAP from E.coli but is considerably more error-prone. It has no detectable proof-reading function but can perform pyrophosphorolysis. Probably transcribes the late genes of the SPbeta phage starting from yonK. This Bacillus pumilus (Bacillus mesentericus) protein is DNA-directed RNA polymerase YonO (yonO).